We begin with the raw amino-acid sequence, 278 residues long: Gamma carbonic anhydrase 2, mitochondrial (278 aa).

Residues 1-43 (MGTLGRAIYTVGNWIRGTGQALDRVGSLLQGSHRIEEHLSRHR) constitute a mitochondrion transit peptide. Substrate-binding positions include 86–88 (RGD) and 101–102 (QD). Residues His-107, His-130, and His-135 each coordinate Zn(2+). Position 209 (Asn-209) interacts with substrate.

This sequence belongs to the gamma-class carbonic anhydrase family. In terms of assembly, homotrimer. Component of the mitochondrial oxidoreductase respiratory chain complex I; element of the extra matrix-exposed domain, which is attached to the membrane arm of this complex. Interacts with GAMMACAL1 and GAMMACAL2. It depends on Zn(2+) as a cofactor. In terms of tissue distribution, constitutively expressed in roots and leaves, with higher levels in flowers, particularly in tapetal tissue of anthers, inflorescence (IM) and floral meristems (FM).

The protein localises to the mitochondrion membrane. Its function is as follows. Enzyme involved in the catabolism of H(2)CO(3) but that does not mediates the reversible hydration of carbon dioxide. Mediates complex I assembly in mitochondria and respiration. Binds HCO(3)-. Required for male fertility during anther development and dehiscence to regulate the secondary thickenings of the endothecial cell wall, probably by modulating H(2)O(2)-dependent lignin polymerization. This Arabidopsis thaliana (Mouse-ear cress) protein is Gamma carbonic anhydrase 2, mitochondrial (GAMMACA2).